The chain runs to 452 residues: Protein MLF3 (452 aa).

Phosphoserine occurs at positions 8, 11, 14, 56, 74, and 79. Positions 61–94 (SGSEVRTPSLRKNSNNVSSPLDNVIPTSRSASNS) are disordered. Positions 64-81 (EVRTPSLRKNSNNVSSPL) are enriched in polar residues. Position 121 is a phosphothreonine (Thr-121). Phosphoserine occurs at positions 145, 156, and 160. Thr-169 is modified (phosphothreonine). Phosphoserine is present on Ser-171. Residues 171–182 (SATLPSSESSPA) are compositionally biased toward polar residues. The tract at residues 171–220 (SATLPSSESSPASPDLKLSRSHSHSAATRPTLNNINNTGMTTTTSNGEPN) is disordered. Position 173 is a phosphothreonine (Thr-173). 2 positions are modified to phosphoserine: Ser-183 and Ser-189. The span at 201-216 (TLNNINNTGMTTTTSN) shows a compositional bias: low complexity. Tyr-227 is subject to Phosphotyrosine. A phosphoserine mark is found at Ser-228, Ser-257, and Ser-265. 2 disordered regions span residues 290 to 321 (PATS…NRSS) and 348 to 402 (IESS…AIGK). Phosphotyrosine is present on Tyr-295. Phosphoserine is present on residues Ser-297, Ser-320, and Ser-353. A compositionally biased stretch (low complexity) spans 299 to 321 (QQSARQYSNNANNNAKSPKNRSS). Over residues 365 to 383 (PSFPLSSSLRSSANLASNP) the composition is skewed to low complexity. A compositionally biased stretch (polar residues) spans 384-398 (ELATQTPLSTSSSYT). A Phosphoserine modification is found at Ser-439.

The protein to yeast VHS2.

Its subcellular location is the cytoplasm. In Saccharomyces cerevisiae (strain ATCC 204508 / S288c) (Baker's yeast), this protein is Protein MLF3 (MLF3).